A 367-amino-acid chain; its full sequence is uncharacterized protein (367 aa).

Positions 1–96 constitute an FAD-binding PCMH-type domain; the sequence is ITLHRLAELV…LTATLQLQPV (96 aa).

The protein to M.tuberculosis Rv3790.

This is an uncharacterized protein from Streptomyces coelicolor.